The primary structure comprises 213 residues: Protein-L-isoaspartate O-methyltransferase (213 aa).

Serine 62 is a catalytic residue.

This sequence belongs to the methyltransferase superfamily. L-isoaspartyl/D-aspartyl protein methyltransferase family.

The protein localises to the cytoplasm. It carries out the reaction [protein]-L-isoaspartate + S-adenosyl-L-methionine = [protein]-L-isoaspartate alpha-methyl ester + S-adenosyl-L-homocysteine. Its function is as follows. Catalyzes the methyl esterification of L-isoaspartyl residues in peptides and proteins that result from spontaneous decomposition of normal L-aspartyl and L-asparaginyl residues. It plays a role in the repair and/or degradation of damaged proteins. The polypeptide is Protein-L-isoaspartate O-methyltransferase (Desulfovibrio desulfuricans (strain ATCC 27774 / DSM 6949 / MB)).